The sequence spans 112 residues: T cell receptor alpha variable 12-1 (112 aa).

The N-terminal stretch at 1 to 20 is a signal peptide; it reads MISLRVLLVILWLQLSWVWS. The Ig-like domain occupies 23–112; that stretch reads KEVEQDPGPF…DSATYLCVVN (90 aa). Asn-43 carries an N-linked (GlcNAc...) asparagine glycan. Cysteines 44 and 109 form a disulfide.

As to quaternary structure, alpha-beta TR is a heterodimer composed of an alpha and beta chain; disulfide-linked. The alpha-beta TR is associated with the transmembrane signaling CD3 coreceptor proteins to form the TR-CD3 (TcR or TCR). The assembly of alpha-beta TR heterodimers with CD3 occurs in the endoplasmic reticulum where a single alpha-beta TR heterodimer associates with one CD3D-CD3E heterodimer, one CD3G-CD3E heterodimer and one CD247 homodimer forming a stable octameric structure. CD3D-CD3E and CD3G-CD3E heterodimers preferentially associate with TR alpha and TR beta chains, respectively. The association of the CD247 homodimer is the last step of TcR assembly in the endoplasmic reticulum and is required for transport to the cell surface.

It localises to the cell membrane. Its function is as follows. V region of the variable domain of T cell receptor (TR) alpha chain that participates in the antigen recognition. Alpha-beta T cell receptors are antigen specific receptors which are essential to the immune response and are present on the cell surface of T lymphocytes. Recognize peptide-major histocompatibility (MH) (pMH) complexes that are displayed by antigen presenting cells (APC), a prerequisite for efficient T cell adaptive immunity against pathogens. Binding of alpha-beta TR to pMH complex initiates TR-CD3 clustering on the cell surface and intracellular activation of LCK that phosphorylates the ITAM motifs of CD3G, CD3D, CD3E and CD247 enabling the recruitment of ZAP70. In turn ZAP70 phosphorylates LAT, which recruits numerous signaling molecules to form the LAT signalosome. The LAT signalosome propagates signal branching to three major signaling pathways, the calcium, the mitogen-activated protein kinase (MAPK) kinase and the nuclear factor NF-kappa-B (NF-kB) pathways, leading to the mobilization of transcription factors that are critical for gene expression and essential for T cell growth and differentiation. The T cell repertoire is generated in the thymus, by V-(D)-J rearrangement. This repertoire is then shaped by intrathymic selection events to generate a peripheral T cell pool of self-MH restricted, non-autoaggressive T cells. Post-thymic interaction of alpha-beta TR with the pMH complexes shapes TR structural and functional avidity. The chain is T cell receptor alpha variable 12-1 from Homo sapiens (Human).